Consider the following 273-residue polypeptide: Urease accessory protein UreD (273 aa).

Belongs to the UreD family. As to quaternary structure, ureD, UreF and UreG form a complex that acts as a GTP-hydrolysis-dependent molecular chaperone, activating the urease apoprotein by helping to assemble the nickel containing metallocenter of UreC. The UreE protein probably delivers the nickel.

Its subcellular location is the cytoplasm. Its function is as follows. Required for maturation of urease via the functional incorporation of the urease nickel metallocenter. The polypeptide is Urease accessory protein UreD (Rhizobium leguminosarum bv. viciae).